The sequence spans 502 residues: Mannitol 2-dehydrogenase (502 aa).

Residue 37–48 (IVHIGVGGFHRA) participates in NAD(+) binding.

It belongs to the mannitol dehydrogenase family. As to quaternary structure, monomer.

The enzyme catalyses D-mannitol + NAD(+) = D-fructose + NADH + H(+). Functionally, catalyzes the NAD(H)-dependent interconversion of D-fructose and D-mannitol in the mannitol metabolic pathway. This Aspergillus clavatus (strain ATCC 1007 / CBS 513.65 / DSM 816 / NCTC 3887 / NRRL 1 / QM 1276 / 107) protein is Mannitol 2-dehydrogenase.